The chain runs to 186 residues: dCTP deaminase (186 aa).

Position 107 to 112 (107 to 112 (KSTYAR)) interacts with dCTP. Glutamate 133 acts as the Proton donor/acceptor in catalysis. DCTP is bound by residues glutamine 152, tyrosine 166, and glutamine 176.

Belongs to the dCTP deaminase family. As to quaternary structure, homotrimer.

It carries out the reaction dCTP + H2O + H(+) = dUTP + NH4(+). Its pathway is pyrimidine metabolism; dUMP biosynthesis; dUMP from dCTP (dUTP route): step 1/2. Functionally, catalyzes the deamination of dCTP to dUTP. This is dCTP deaminase from Campylobacter lari (strain RM2100 / D67 / ATCC BAA-1060).